The primary structure comprises 226 residues: RNA pyrophosphohydrolase (226 aa).

Residues 6–149 enclose the Nudix hydrolase domain; it reads GFRPNVGIIL…KRGVYEMALT (144 aa). A Nudix box motif is present at residues 38 to 59; that stretch reads GGIDRGETPEQAMFRELHEEVG. Residues 197–226 are disordered; the sequence is MELPPGASFDPDPRTGDGDPGMPGIHKPAG.

This sequence belongs to the Nudix hydrolase family. RppH subfamily. Requires a divalent metal cation as cofactor.

Accelerates the degradation of transcripts by removing pyrophosphate from the 5'-end of triphosphorylated RNA, leading to a more labile monophosphorylated state that can stimulate subsequent ribonuclease cleavage. In Paracidovorax citrulli (strain AAC00-1) (Acidovorax citrulli), this protein is RNA pyrophosphohydrolase.